The chain runs to 401 residues: Cysteine desulfurase (401 aa).

Pyridoxal 5'-phosphate is bound by residues 72–73, Asn151, Gln179, and 199–201; these read AT and SAH. N6-(pyridoxal phosphate)lysine is present on Lys202. A pyridoxal 5'-phosphate-binding site is contributed by Thr237. Residue Cys324 is the Cysteine persulfide intermediate of the active site. Cys324 contributes to the [2Fe-2S] cluster binding site.

Belongs to the class-V pyridoxal-phosphate-dependent aminotransferase family. NifS/IscS subfamily. As to quaternary structure, homodimer. Pyridoxal 5'-phosphate serves as cofactor.

It catalyses the reaction (sulfur carrier)-H + L-cysteine = (sulfur carrier)-SH + L-alanine. Catalyzes the removal of elemental sulfur atoms from cysteine to produce alanine. Seems to participate in the biosynthesis of the nitrogenase metalloclusters by providing the inorganic sulfur required for the Fe-S core formation. The polypeptide is Cysteine desulfurase (Enterobacter agglomerans (Erwinia herbicola)).